We begin with the raw amino-acid sequence, 513 residues long: MVEEVQKHSVHTLVFRSLKRTHDMFVADNGKPVPLDEESHKRKMAIKLRNEYGPVLHMPTSKENLKEKGPQNATDSYPHKQYPANQGQDVEYLVTGTHPYPAGPGVALTADTKIQRMPSESAAQSLAVALPSQTRVDANRTGPAGSEYRHPGASDRSQPTAMNSIMETGNTKNSALMAKKAPTMPKPQWHPPWKLYRVISGHLGWVRCIAVEPGNQWFVTGSADRTIKIWDLASGKLKLSLTGHISTVRGVIVSTRSPYLFSCGEDKQVKCWDLEYNKVIRHYHGHLSAVYGLDLHPTLDVLVTCSRDSTARIWDVRTKASVHTLSGHTNAVATVRCQAAEPQIITGSHDTTIRLWDLVAGKTRVTLTNHKKSVRAVVLHPLLYTFASGSPDNIKQWKFPDGGFIQNLSGHNAIINTLAVNADGVLVSGADNGTMHLWDWRTGYNFQRVHAAVQPGSLDSESGIFACAFDRSESRLLTAEADKTIKVYREDETATEETHPVSWKPEIIKRKRF.

Methionine 1 is subject to N-acetylmethionine. Residues 60–79 form a disordered region; that stretch reads TSKENLKEKGPQNATDSYPH. Serine 119 is modified (phosphoserine). A disordered region spans residues 136–160; it reads VDANRTGPAGSEYRHPGASDRSQPT. The residue at position 200 (serine 200) is a Phosphoserine. WD repeat units follow at residues 201 to 240, 243 to 282, 285 to 324, 327 to 366, 369 to 409, 410 to 448, and 459 to 498; these read GHLGWVRCIAVEPGNQWFVTGSADRTIKIWDLASGKLKLS, GHISTVRGVIVSTRSPYLFSCGEDKQVKCWDLEYNKVIRH, GHLSAVYGLDLHPTLDVLVTCSRDSTARIWDVRTKASVHT, GHTNAVATVRCQAAEPQIITGSHDTTIRLWDLVAGKTRVT, NHKK…QNLS, GHNAIINTLAVNADGVLVSGADNGTMHLWDWRTGYNFQR, and DSESGIFACAFDRSESRLLTAEADKTIKVYREDETATEET. A Phosphoserine modification is found at serine 390.

Belongs to the WD repeat PRL1/PRL2 family. Identified in the spliceosome C complex. Component of the PRP19-CDC5L splicing complex composed of a core complex comprising a homotetramer of PRPF19, CDC5L, PLRG1 and BCAS2, and at least three less stably associated proteins CTNNBL1, CWC15 and HSPA8. Interacts (via its WD40 repeat domain) directly with CDC5L (via its C-terminal); the interaction is required for mRNA splicing but not for spliceosome assembly. Component of the minor spliceosome, which splices U12-type introns. Within this complex, interacts with CRIPT. Also interacts directly in the complex with BCAS2 and PRPF19. Interacts with USB1.

It localises to the nucleus. Its subcellular location is the nucleus speckle. Functionally, involved in pre-mRNA splicing as component of the spliceosome. Component of the PRP19-CDC5L complex that forms an integral part of the spliceosome and is required for activating pre-mRNA splicing. As a component of the minor spliceosome, involved in the splicing of U12-type introns in pre-mRNAs. In Mus musculus (Mouse), this protein is Pleiotropic regulator 1 (Plrg1).